The chain runs to 299 residues: Glycine--tRNA ligase alpha subunit (299 aa).

Belongs to the class-II aminoacyl-tRNA synthetase family. In terms of assembly, tetramer of two alpha and two beta subunits.

It localises to the cytoplasm. It carries out the reaction tRNA(Gly) + glycine + ATP = glycyl-tRNA(Gly) + AMP + diphosphate. This Dictyoglomus thermophilum (strain ATCC 35947 / DSM 3960 / H-6-12) protein is Glycine--tRNA ligase alpha subunit.